The chain runs to 511 residues: MLVDGPSERPALCFLLLAVAMSFFGSALSIDETRAHLLLKEKMMRLGGRLVLNTKEELANERLMTLKIAEMKEAMRTLIFPPSMHFFQAKHLIERSQVFNILRMMPKGAALHLHDIGIVTMDWLVRNVTYRPHCHICFTPRGIMQFRFAHPTPRPSEKCSKWILLEDYRKRVQNVTEFDDSLLRNFTLVTQHPEVIYTNQNVVWSKFETIFFTISGLIHYAPVFRDYVFRSMQEFYEDNVLYMEIRARLLPVYELSGEHHDEEWSVKTYQEVAQKFVETHPEFIGIKIIYSDHRSKDVAVIAESIRMAMGLRIKFPTVVAGFDLVGHEDTGHSLHDYKEALMIPAKDGVKLPYFFHAGETDWQGTSIDRNILDALMLNTTRIGHGFALSKHPAVRTYSWKKDIPIEVCPISNQVLKLVSDLRNHPVATLMATGHPMVISSDDPAMFGAKGLSYDFYEVFMGIGGMKADLRTLKQLAMNSIKYSTLLESEKNTFMEIWKKRWDKFIADVATK.

The signal sequence occupies residues 1 to 29 (MLVDGPSERPALCFLLLAVAMSFFGSALS). The dimerization stretch occupies residues 30-100 (IDETRAHLLL…HLIERSQVFN (71 aa)). Zn(2+)-binding residues include His112 and His114. Asp115 contacts substrate. The N-linked (GlcNAc...) asparagine glycan is linked to Asn127. Positions 127-185 (NVTYRPHCHICFTPRGIMQFRFAHPTPRPSEKCSKWILLEDYRKRVQNVTEFDDSLLRN) are PRB domain. A disulfide bond links Cys137 and Cys159. Asn174 and Asn185 each carry an N-linked (GlcNAc...) asparagine glycan. Substrate contacts are provided by residues 204-211 (WSKFETIF), His293, and Gly326. His356 lines the Zn(2+) pocket. Glu359 serves as the catalytic Proton donor. Asn378 is a glycosylation site (N-linked (GlcNAc...) asparagine). The active-site Proton acceptor is His384. Residue Asp441 coordinates Zn(2+). Residue Asp442 participates in substrate binding.

This sequence belongs to the metallo-dependent hydrolases superfamily. Adenosine and AMP deaminases family. ADGF subfamily. Homodimer. Interacts with adenosine receptors. Binds heparin. Zn(2+) is required as a cofactor. In terms of tissue distribution, detected in blood plasma (at protein level). Widely expressed, with most abundant expression in human adult heart, lung, lymphoblasts, and placenta as well as fetal lung, liver, and kidney. In embryo, expressed in the outflow tract and atrium of the developing heart, the VII/VIII cranial nerve ganglion, and the notochord.

The protein resides in the secreted. It carries out the reaction adenosine + H2O + H(+) = inosine + NH4(+). In terms of biological role, adenosine deaminase that may contribute to the degradation of extracellular adenosine, a signaling molecule that controls a variety of cellular responses. Requires elevated adenosine levels for optimal enzyme activity. Binds to cell surfaces via proteoglycans and may play a role in the regulation of cell proliferation and differentiation, independently of its enzyme activity. This Homo sapiens (Human) protein is Adenosine deaminase 2.